The sequence spans 644 residues: Exoribonuclease 2 (644 aa).

One can recognise an RNB domain in the interval 189–516; that stretch reads REDLTALDFV…NHRLLKAVIK (328 aa). Residues 561-643 enclose the S1 motif domain; that stretch reads DTRFAAEIVD…ETRSIIARPV (83 aa).

This sequence belongs to the RNR ribonuclease family. RNase II subfamily.

Its subcellular location is the cytoplasm. It catalyses the reaction Exonucleolytic cleavage in the 3'- to 5'-direction to yield nucleoside 5'-phosphates.. Its function is as follows. Involved in mRNA degradation. Hydrolyzes single-stranded polyribonucleotides processively in the 3' to 5' direction. This Escherichia coli (strain ATCC 8739 / DSM 1576 / NBRC 3972 / NCIMB 8545 / WDCM 00012 / Crooks) protein is Exoribonuclease 2.